The primary structure comprises 340 residues: Glycerol-3-phosphate dehydrogenase [NAD(P)+] (340 aa).

5 residues coordinate NADPH: Ser23, Trp24, Arg43, Lys44, and Lys113. Sn-glycerol 3-phosphate-binding residues include Lys113, Gly141, and Thr143. Residue Ala145 participates in NADPH binding. Residues Lys196, Asp249, Ser259, Arg260, and Asn261 each contribute to the sn-glycerol 3-phosphate site. Lys196 functions as the Proton acceptor in the catalytic mechanism. An NADPH-binding site is contributed by Arg260. Glu286 provides a ligand contact to NADPH.

This sequence belongs to the NAD-dependent glycerol-3-phosphate dehydrogenase family.

The protein resides in the cytoplasm. The catalysed reaction is sn-glycerol 3-phosphate + NAD(+) = dihydroxyacetone phosphate + NADH + H(+). The enzyme catalyses sn-glycerol 3-phosphate + NADP(+) = dihydroxyacetone phosphate + NADPH + H(+). The protein operates within membrane lipid metabolism; glycerophospholipid metabolism. Its function is as follows. Catalyzes the reduction of the glycolytic intermediate dihydroxyacetone phosphate (DHAP) to sn-glycerol 3-phosphate (G3P), the key precursor for phospholipid synthesis. The polypeptide is Glycerol-3-phosphate dehydrogenase [NAD(P)+] (Zymomonas mobilis subsp. mobilis (strain ATCC 31821 / ZM4 / CP4)).